The following is a 322-amino-acid chain: N-acetyl-gamma-glutamyl-phosphate reductase (322 aa).

Cys132 is a catalytic residue.

This sequence belongs to the NAGSA dehydrogenase family. Type 1 subfamily.

It localises to the cytoplasm. The catalysed reaction is N-acetyl-L-glutamate 5-semialdehyde + phosphate + NADP(+) = N-acetyl-L-glutamyl 5-phosphate + NADPH + H(+). The protein operates within amino-acid biosynthesis; L-arginine biosynthesis; N(2)-acetyl-L-ornithine from L-glutamate: step 3/4. In terms of biological role, catalyzes the NADPH-dependent reduction of N-acetyl-5-glutamyl phosphate to yield N-acetyl-L-glutamate 5-semialdehyde. This chain is N-acetyl-gamma-glutamyl-phosphate reductase, found in Parabacteroides distasonis (strain ATCC 8503 / DSM 20701 / CIP 104284 / JCM 5825 / NCTC 11152).